A 78-amino-acid polypeptide reads, in one-letter code: Acyl carrier protein (78 aa).

The Carrier domain maps to S2–K77. Residue S37 is modified to O-(pantetheine 4'-phosphoryl)serine.

Belongs to the acyl carrier protein (ACP) family. Post-translationally, 4'-phosphopantetheine is transferred from CoA to a specific serine of apo-ACP by AcpS. This modification is essential for activity because fatty acids are bound in thioester linkage to the sulfhydryl of the prosthetic group.

It is found in the cytoplasm. It functions in the pathway lipid metabolism; fatty acid biosynthesis. Its function is as follows. Carrier of the growing fatty acid chain in fatty acid biosynthesis. The protein is Acyl carrier protein of Novosphingobium aromaticivorans (strain ATCC 700278 / DSM 12444 / CCUG 56034 / CIP 105152 / NBRC 16084 / F199).